The following is a 183-amino-acid chain: Apo-citrate lyase phosphoribosyl-dephospho-CoA transferase (183 aa).

It belongs to the CitX family.

The enzyme catalyses apo-[citrate lyase ACP] + 2'-(5''-triphospho-alpha-D-ribosyl)-3'-dephospho-CoA = holo-[citrate lyase ACP] + diphosphate. Its function is as follows. Transfers 2-(5''-triphosphoribosyl)-3'-dephosphocoenzyme-A on a serine residue to the apo-acyl carrier protein (gamma chain) of the citrate lyase to yield holo-acyl carrier protein. The chain is Apo-citrate lyase phosphoribosyl-dephospho-CoA transferase from Shigella flexneri serotype 5b (strain 8401).